Reading from the N-terminus, the 167-residue chain is uncharacterized protein (167 aa).

The N-acetyltransferase domain maps to 1 to 148; it reads MLIRVEIPID…SAFQVHRLAD (148 aa).

This sequence belongs to the acetyltransferase family.

This is an uncharacterized protein from Escherichia coli O157:H7.